Here is a 75-residue protein sequence, read N- to C-terminus: Insecticidal toxin OcyC10 (75 aa).

A signal peptide spans 1–19 (MNFATKIVILLLVAALILA). 2 disulfide bridges follow: C50-C62 and C56-C68.

Expressed by the venom gland.

The protein resides in the secreted. Insecticidal toxin. This chain is Insecticidal toxin OcyC10, found in Opisthacanthus cayaporum (South American scorpion).